The primary structure comprises 533 residues: WD repeat-containing protein PAC11 (533 aa).

A compositionally biased stretch (basic and acidic residues) spans 1-19 (MERLKQLEEKRRQLKELRE). The interval 1–36 (MERLKQLEEKRRQLKELRERRKQASLFPGSETMGHH) is disordered. 2 WD repeats span residues 380–422 (FDEV…YLSL) and 432–475 (NHST…AIIG).

Interacts with NUM1, when DYN1 is present.

Its subcellular location is the cytoplasm. It localises to the cytoskeleton. Its function is as follows. Required for viability in the absence of the kinesin-related CIN8 mitotic motor. May be a dynein intermediate chain. The polypeptide is WD repeat-containing protein PAC11 (PAC11) (Saccharomyces cerevisiae (strain ATCC 204508 / S288c) (Baker's yeast)).